The sequence spans 135 residues: MALERTLSIIKPDAVAKNVIGEIYTRFERAGFKIVEAKMIQLDDELAGGFYAEHKERPFYKDLVAFMTSGPVVVSVLEGEGAVLRHRELMGATNPKEAAAGTLRADYATSIDANAVHGSDSVESATREIAYFFGK.

Residues K11, F59, R87, T93, R104, and N114 each contribute to the ATP site. The Pros-phosphohistidine intermediate role is filled by H117.

Belongs to the NDK family. As to quaternary structure, homotetramer. Mg(2+) serves as cofactor.

Its subcellular location is the cytoplasm. The enzyme catalyses a 2'-deoxyribonucleoside 5'-diphosphate + ATP = a 2'-deoxyribonucleoside 5'-triphosphate + ADP. It catalyses the reaction a ribonucleoside 5'-diphosphate + ATP = a ribonucleoside 5'-triphosphate + ADP. Functionally, major role in the synthesis of nucleoside triphosphates other than ATP. The ATP gamma phosphate is transferred to the NDP beta phosphate via a ping-pong mechanism, using a phosphorylated active-site intermediate. The protein is Nucleoside diphosphate kinase of Marinomonas sp. (strain MWYL1).